The primary structure comprises 382 residues: 1-deoxy-D-xylulose 5-phosphate reductoisomerase (382 aa).

Residues Thr-10, Gly-11, Ser-12, Ile-13, Gly-36, and Asn-122 each coordinate NADPH. Lys-123 serves as a coordination point for 1-deoxy-D-xylulose 5-phosphate. Glu-124 is a binding site for NADPH. Asp-148 provides a ligand contact to Mn(2+). Positions 149, 150, 174, and 197 each coordinate 1-deoxy-D-xylulose 5-phosphate. Mn(2+) is bound at residue Glu-150. NADPH is bound at residue Gly-203. 1-deoxy-D-xylulose 5-phosphate is bound by residues Ser-210, Asn-215, Lys-216, and Glu-219. Glu-219 serves as a coordination point for Mn(2+).

Belongs to the DXR family. Mg(2+) serves as cofactor. Requires Mn(2+) as cofactor.

The enzyme catalyses 2-C-methyl-D-erythritol 4-phosphate + NADP(+) = 1-deoxy-D-xylulose 5-phosphate + NADPH + H(+). Its pathway is isoprenoid biosynthesis; isopentenyl diphosphate biosynthesis via DXP pathway; isopentenyl diphosphate from 1-deoxy-D-xylulose 5-phosphate: step 1/6. Its function is as follows. Catalyzes the NADPH-dependent rearrangement and reduction of 1-deoxy-D-xylulose-5-phosphate (DXP) to 2-C-methyl-D-erythritol 4-phosphate (MEP). This chain is 1-deoxy-D-xylulose 5-phosphate reductoisomerase, found in Chlorobium chlorochromatii (strain CaD3).